Consider the following 290-residue polypeptide: Undecaprenyl-diphosphatase 2 (290 aa).

The next 6 membrane-spanning stretches (helical) occupy residues 104-124, 128-148, 174-194, 205-225, 237-257, and 268-288; these read WMVI…KDLI, LRNL…FILA, CLAL…GLFL, SFLL…PDAF, QLFV…AWLL, and FALW…FGVL.

This sequence belongs to the UppP family.

Its subcellular location is the cell membrane. It carries out the reaction di-trans,octa-cis-undecaprenyl diphosphate + H2O = di-trans,octa-cis-undecaprenyl phosphate + phosphate + H(+). Catalyzes the dephosphorylation of undecaprenyl diphosphate (UPP). Confers resistance to bacitracin. This is Undecaprenyl-diphosphatase 2 from Corynebacterium jeikeium (strain K411).